The primary structure comprises 304 residues: N-acetylglucosaminyl-phosphatidylinositol de-N-acetylase (304 aa).

Over 1–20 the chain is Lumenal; it reads MKMLRRTKVNFSKLLYKITK. Residues 21–38 form a helical membrane-spanning segment; the sequence is LAIVLTILYIYFTPKIVS. Residues 39–304 lie on the Cytoplasmic side of the membrane; that stretch reads RNNASLQHIF…FVNEFDVYTY (266 aa).

This sequence belongs to the PIGL family.

It is found in the endoplasmic reticulum membrane. It catalyses the reaction a 6-(N-acetyl-alpha-D-glucosaminyl)-1-(1,2-diacyl-sn-glycero-3-phospho)-1D-myo-inositol + H2O = a 6-(alpha-D-glucosaminyl)-1-(1,2-diacyl-sn-glycero-3-phospho)-1D-myo-inositol + acetate. It functions in the pathway glycolipid biosynthesis; glycosylphosphatidylinositol-anchor biosynthesis. Functionally, involved in the second step of GPI biosynthesis. De-N-acetylation of N-acetylglucosaminyl-phosphatidylinositol. The chain is N-acetylglucosaminyl-phosphatidylinositol de-N-acetylase (GPI12) from Saccharomyces cerevisiae (strain ATCC 204508 / S288c) (Baker's yeast).